The sequence spans 927 residues: Probable UDP-N-acetylglucosamine--peptide N-acetylglucosaminyltransferase SPINDLY (927 aa).

The segment at 1–31 (MGRPGMDSSEGRESNGVVPERNGGAVPAKQQ) is disordered. TPR repeat units follow at residues 34–67 (GKDT…DEAN), 68–101 (VEAL…DPGN), 102–135 (ACAL…DPSY), 143–176 (AIVL…DSHY), 177–210 (APAY…RPLY), 211–244 (AEAY…SPNF), 252–285 (AIAL…NWHY), 286–319 (ADAM…NPRC), 320–353 (AEAC…KPNF), 355–387 (QSLN…NSTY), and 388–421 (AEAY…DPDS). The catalytic region stretch occupies residues 422 to 927 (RNAGQNRLLA…KVEANGHISR (506 aa)).

Belongs to the glycosyltransferase 41 family. O-GlcNAc transferase subfamily.

The protein localises to the nucleus. It catalyses the reaction L-seryl-[protein] + UDP-N-acetyl-alpha-D-glucosamine = 3-O-(N-acetyl-beta-D-glucosaminyl)-L-seryl-[protein] + UDP + H(+). The catalysed reaction is L-threonyl-[protein] + UDP-N-acetyl-alpha-D-glucosamine = 3-O-(N-acetyl-beta-D-glucosaminyl)-L-threonyl-[protein] + UDP + H(+). It functions in the pathway protein modification; protein glycosylation. Probable O-linked N-acetylglucosamine transferase (OGT) involved in various processes such as gibberellin (GA) signaling pathway. OGTs catalyze the addition of nucleotide-activated sugars directly onto the polypeptide through O-glycosidic linkage with the hydroxyl of serine or threonine. Probably acts by adding O-linked sugars to yet unknown proteins. This Oryza sativa subsp. japonica (Rice) protein is Probable UDP-N-acetylglucosamine--peptide N-acetylglucosaminyltransferase SPINDLY (SPY).